The primary structure comprises 163 residues: MVTKKSKKAWPWLWFSVLVILLDQLSKYLANHFLSLGHPVKILPFLNFTLNYNTGAAFSFLGTENGWQIIFFAAISFVVSIFLILWLSRTSRSEIMMSLGLSLIIGGALGNFIDRLRWSYVTDFIDFHIKDWHFATFNVADSAICVGVFLLIVHMLLTPSSKP.

4 helical membrane passes run 9–29 (AWPW…SKYL), 42–62 (ILPF…SFLG), 67–87 (WQII…ILWL), and 93–113 (SEIM…GNFI). Residues D123 and D141 contribute to the active site. The helical transmembrane segment at 137-157 (FNVADSAICVGVFLLIVHMLL) threads the bilayer.

It belongs to the peptidase A8 family.

Its subcellular location is the cell inner membrane. The enzyme catalyses Release of signal peptides from bacterial membrane prolipoproteins. Hydrolyzes -Xaa-Yaa-Zaa-|-(S,diacylglyceryl)Cys-, in which Xaa is hydrophobic (preferably Leu), and Yaa (Ala or Ser) and Zaa (Gly or Ala) have small, neutral side chains.. It participates in protein modification; lipoprotein biosynthesis (signal peptide cleavage). Functionally, this protein specifically catalyzes the removal of signal peptides from prolipoproteins. This Coxiella burnetii (strain RSA 331 / Henzerling II) protein is Lipoprotein signal peptidase.